A 180-amino-acid polypeptide reads, in one-letter code: ATP synthase subunit delta (180 aa).

This sequence belongs to the ATPase delta chain family. In terms of assembly, F-type ATPases have 2 components, F(1) - the catalytic core - and F(0) - the membrane proton channel. F(1) has five subunits: alpha(3), beta(3), gamma(1), delta(1), epsilon(1). F(0) has three main subunits: a(1), b(2) and c(10-14). The alpha and beta chains form an alternating ring which encloses part of the gamma chain. F(1) is attached to F(0) by a central stalk formed by the gamma and epsilon chains, while a peripheral stalk is formed by the delta and b chains.

It localises to the cell membrane. F(1)F(0) ATP synthase produces ATP from ADP in the presence of a proton or sodium gradient. F-type ATPases consist of two structural domains, F(1) containing the extramembraneous catalytic core and F(0) containing the membrane proton channel, linked together by a central stalk and a peripheral stalk. During catalysis, ATP synthesis in the catalytic domain of F(1) is coupled via a rotary mechanism of the central stalk subunits to proton translocation. Functionally, this protein is part of the stalk that links CF(0) to CF(1). It either transmits conformational changes from CF(0) to CF(1) or is implicated in proton conduction. This is ATP synthase subunit delta from Dehalococcoides mccartyi (strain ATCC BAA-2100 / JCM 16839 / KCTC 5957 / BAV1).